A 260-amino-acid polypeptide reads, in one-letter code: uncharacterized protein (260 aa).

This sequence belongs to the methyltransferase superfamily.

It is found in the cytoplasm. It localises to the nucleus. Functionally, probable methyltransferase. This is an uncharacterized protein from Schizosaccharomyces pombe (strain 972 / ATCC 24843) (Fission yeast).